Reading from the N-terminus, the 1026-residue chain is Multidrug resistance protein MdtC (1026 aa).

11 helical membrane-spanning segments follow: residues 15 to 35, 333 to 353, 360 to 380, 387 to 407, 431 to 451, 463 to 483, 528 to 548, 853 to 873, 897 to 917, 953 to 973, and 984 to 1004; these read ILIA…LPVA, EVEE…FLFL, LIPA…MYLC, LSLM…IVVL, VGFT…PLLL, FAVT…TLTP, LVGV…IAIP, LILI…LYES, LFNA…IGIV, PIMM…LSGG, and ITIV…TPVV.

It belongs to the resistance-nodulation-cell division (RND) (TC 2.A.6) family. MdtC subfamily. As to quaternary structure, part of a tripartite efflux system composed of MdtA, MdtB and MdtC. MdtC forms a heteromultimer with MdtB.

Its subcellular location is the cell inner membrane. The polypeptide is Multidrug resistance protein MdtC (Salmonella agona (strain SL483)).